Consider the following 119-residue polypeptide: Large ribosomal subunit protein bL20 (119 aa).

The protein belongs to the bacterial ribosomal protein bL20 family.

Binds directly to 23S ribosomal RNA and is necessary for the in vitro assembly process of the 50S ribosomal subunit. It is not involved in the protein synthesizing functions of that subunit. In Bordetella bronchiseptica (strain ATCC BAA-588 / NCTC 13252 / RB50) (Alcaligenes bronchisepticus), this protein is Large ribosomal subunit protein bL20.